A 77-amino-acid polypeptide reads, in one-letter code: U8-lycotoxin-Ls1t (77 aa).

The first 20 residues, 1–20, serve as a signal peptide directing secretion; that stretch reads MKLIIFTGLVLFAIVSLIEA. A propeptide spanning residues 21–26 is cleaved from the precursor; it reads QAENEK.

Belongs to the neurotoxin 19 (CSTX) family. 08 (U8-Lctx) subfamily. Contains 4 disulfide bonds. In terms of tissue distribution, expressed by the venom gland.

The protein resides in the secreted. In Lycosa singoriensis (Wolf spider), this protein is U8-lycotoxin-Ls1t.